The chain runs to 731 residues: 1,4-alpha-glucan branching enzyme GlgB (731 aa).

The active-site Nucleophile is aspartate 411. Glutamate 464 functions as the Proton donor in the catalytic mechanism.

It belongs to the glycosyl hydrolase 13 family. GlgB subfamily. In terms of assembly, monomer.

The catalysed reaction is Transfers a segment of a (1-&gt;4)-alpha-D-glucan chain to a primary hydroxy group in a similar glucan chain.. Its pathway is glycan biosynthesis; glycogen biosynthesis. Its function is as follows. Catalyzes the formation of the alpha-1,6-glucosidic linkages in glycogen by scission of a 1,4-alpha-linked oligosaccharide from growing alpha-1,4-glucan chains and the subsequent attachment of the oligosaccharide to the alpha-1,6 position. In Mycobacterium tuberculosis (strain ATCC 25177 / H37Ra), this protein is 1,4-alpha-glucan branching enzyme GlgB.